Reading from the N-terminus, the 370-residue chain is Glutamine synthetase (370 aa).

Positions 23–102 (VLAEYVWIDA…VLTECWNNDG (80 aa)) constitute a GS beta-grasp domain. Positions 40–69 (CKTLDKKPSSVEDLPEWNFDGSSTGQAPGH) are disordered. The 262-residue stretch at 109–370 (HRHESAKLMK…FKEYARESSD (262 aa)) folds into the GS catalytic domain.

This sequence belongs to the glutamine synthetase family. As to quaternary structure, homooctamer.

Its subcellular location is the cytoplasm. It catalyses the reaction L-glutamate + NH4(+) + ATP = L-glutamine + ADP + phosphate + H(+). This Debaryomyces hansenii (strain ATCC 36239 / CBS 767 / BCRC 21394 / JCM 1990 / NBRC 0083 / IGC 2968) (Yeast) protein is Glutamine synthetase (GLN1).